We begin with the raw amino-acid sequence, 648 residues long: Replication restart protein PriA (648 aa).

The 167-residue stretch at 131–297 (TILNESNKPT…KTHKYQLVTL (167 aa)) folds into the Helicase ATP-binding domain. 144-151 (GVTGSGKT) is an ATP binding site. The DEAH box signature appears at 240-243 (DEEH). Zn(2+) contacts are provided by cysteine 358, cysteine 361, cysteine 367, cysteine 370, cysteine 385, cysteine 388, cysteine 398, and cysteine 401. The Helicase C-terminal domain maps to 375–548 (VLHKATKKLE…RFFTNELEIR (174 aa)).

This sequence belongs to the helicase family. PriA subfamily. Component of the replication restart primosome. Requires Zn(2+) as cofactor.

The enzyme catalyses Couples ATP hydrolysis with the unwinding of duplex DNA by translocating in the 3'-5' direction.. It catalyses the reaction ATP + H2O = ADP + phosphate + H(+). In terms of biological role, initiates the restart of stalled replication forks, which reloads the replicative helicase on sites other than the origin of replication. Recognizes and binds to abandoned replication forks and remodels them to uncover a helicase loading site. Promotes assembly of the primosome at these replication forks. This is Replication restart protein PriA from Rickettsia prowazekii (strain Madrid E).